The following is a 970-amino-acid chain: MATRGHVQDPNDRRLRPIYDYLDNGNNKMAIQQADKLLKKHRDLHCAKVLKAIGLQRTGRQEEAFTLAQEVAALEPTDDNSLQALTILYREMHRPELVTKLYEAAVKKVPNSEEYHSHLFMAYARVGEYKKMQQAGMALYKIVPKNPYYFWSVMSLIMQSISARDENLSKTMFLPLAERMVEKMVKEDKIEAEAEVELYYMILERLGKYQEALDVIRGKLGEKLTSEIQSRENKCMAMYKKLSKWPECNALSRRLLLKNSDDWQFYLTYFDSVFRLIEEAWTPPAEGEHSLEGEVHCSAEDAVKFIEDRITEASQSSRHVRGPHLAKLELIRRLRSQGCNDEFRLGDPEELMFQYFKKFGDKPCCFTDLKVFVDLLPAAQCTQFINQLLGVVPLSTPTEDKLALPADIRGLQQHLCVVQLTRLLGLYHSMDKNQKLDVVRELMLRYQHGLEFGRSCLKTELQFSDYYCLLAVHVLIDIWREAGEETAVWQALTLLEEGLTHSPSNAQFKLLLVRIYCVLGAFEPVVDLYSSLDAKHIQHDTIGYLLTRYAASLGQYAAASQSCNFALRFFHSNQKDTSEYIIQAYKYGAFEKIPEFIAFRNRLNNSLHFAQVRTERMLLDLLLEANISTSLAESIKSMNLRPEEDDVPWEDLRDNRDLDVFFSWDPKDRNVSEEHKKLSLEEETMWLRIRSLTLRLISALPSLTHPVEPRNSEKTSENGVSSRVDVLRLLLQQLEVAVETGKRFIEKEIQYPFLGPVPTRMGRFFSSGCCQCQVHSFHLVSDVYELDTSGLEGTVDIQERIENSLASLLELLKGVFSTCKGDLLEVKDGNVKTQPAVLENLVFFVETISIVLWVSSYCESVLRPYKLNIQKKKKKKKETSIVMPPIFTSFQDYVTGLQTVISNAVDHIKGLEAHLIALKLEELTLEDTSISPVNLSNCHVLSVRRRDPGSYWKLGAVEPMCADVCPSVQI.

TPR repeat units follow at residues 11 to 44 (NDRRLRPIYDYLDNGNNKMAIQQADKLLKKHRDL), 45 to 78 (HCAKVLKAIGLQRTGRQEEAFTLAQEVAALEPTD), 79 to 112 (DNSLQALTILYREMHRPELVTKLYEAAVKKVPNS), and 114 to 146 (EYHSHLFMAYARVGEYKKMQQAGMALYKIVPKN).

It belongs to the MDM20/NAA25 family. Component of the N-terminal acetyltransferase B (NatB) complex which is composed of NAA20 and NAA25.

It localises to the cytoplasm. Non-catalytic subunit of the NatB complex which catalyzes acetylation of the N-terminal methionine residues of peptides beginning with Met-Asp, Met-Glu, Met-Asn and Met-Gln. May play a role in normal cell-cycle progression. The sequence is that of N-alpha-acetyltransferase 25, NatB auxiliary subunit (Naa25) from Rattus norvegicus (Rat).